Reading from the N-terminus, the 298-residue chain is dTDP-4-dehydrorhamnose reductase (298 aa).

NADH is bound by residues Gly10–Val12, Asp35–Leu36, and Ala59–Thr61. NADPH contacts are provided by residues Gln11–Val12, Asp35–Leu36, Ala59–Thr61, and Tyr98. Thr100 to Asp101 contacts dTDP-beta-L-rhamnose. 2 residues coordinate NADH: Tyr124 and Lys128. The NADPH site is built by Tyr124 and Lys128. Residue Tyr124 is the Proton donor/acceptor of the active site. Residue Trp149 coordinates dTDP-beta-L-rhamnose.

It belongs to the dTDP-4-dehydrorhamnose reductase family. Homodimer. It depends on Mg(2+) as a cofactor.

It catalyses the reaction dTDP-beta-L-rhamnose + NADP(+) = dTDP-4-dehydro-beta-L-rhamnose + NADPH + H(+). It functions in the pathway carbohydrate biosynthesis; dTDP-L-rhamnose biosynthesis. The protein operates within bacterial outer membrane biogenesis; LPS O-antigen biosynthesis. Involved in the biosynthesis of the dTDP-L-rhamnose which is an important component of lipopolysaccharide (LPS). Catalyzes the reduction of dTDP-6-deoxy-L-lyxo-4-hexulose to yield dTDP-L-rhamnose. The chain is dTDP-4-dehydrorhamnose reductase from Burkholderia thailandensis (strain ATCC 700388 / DSM 13276 / CCUG 48851 / CIP 106301 / E264).